The sequence spans 262 residues: 5'-nucleotidase SurE (262 aa).

Asp-8, Asp-9, Ser-40, and Asn-92 together coordinate a divalent metal cation.

This sequence belongs to the SurE nucleotidase family. A divalent metal cation is required as a cofactor.

Its subcellular location is the cytoplasm. The enzyme catalyses a ribonucleoside 5'-phosphate + H2O = a ribonucleoside + phosphate. Functionally, nucleotidase that shows phosphatase activity on nucleoside 5'-monophosphates. This chain is 5'-nucleotidase SurE, found in Xylella fastidiosa (strain M23).